The primary structure comprises 265 residues: UPF0354 protein GTNG_2723 (265 aa).

Belongs to the UPF0354 family.

This is UPF0354 protein GTNG_2723 from Geobacillus thermodenitrificans (strain NG80-2).